The sequence spans 276 residues: Golgi apparatus membrane protein TVP23 homolog C (276 aa).

N-acetylmethionine is present on Met1. A disordered region spans residues 1-21; sequence MLQQDSNDDTEDVSLFDAEEE. 2 helical membrane passes run 52–72 and 126–146; these read LLCE…ILLL and IFWL…FSAL. Residues 254–276 form a disordered region; sequence GESPNSRGTGEPGPKFHLASGMH.

Belongs to the TVP23 family.

Its subcellular location is the membrane. The protein is Golgi apparatus membrane protein TVP23 homolog C (TVP23C) of Homo sapiens (Human).